The following is a 31-amino-acid chain: Cyclotide vibi-F (31 aa).

Residues glycine 1–asparagine 31 constitute a cross-link (cyclopeptide (Gly-Asn)). 3 disulfides stabilise this stretch: cysteine 5/cysteine 21, cysteine 9/cysteine 23, and cysteine 14/cysteine 28.

Post-translationally, this is a cyclic peptide.

Probably participates in a plant defense mechanism. The sequence is that of Cyclotide vibi-F from Viola biflora (Yellow wood violet).